The sequence spans 84 residues: Small ribosomal subunit protein bS16c (84 aa).

This sequence belongs to the bacterial ribosomal protein bS16 family.

The protein resides in the plastid. The protein localises to the chloroplast. The chain is Small ribosomal subunit protein bS16c from Mesostigma viride (Green alga).